Consider the following 301-residue polypeptide: Glutamine amidotransferase-like protein GlxB (301 aa).

Cys2 is an active-site residue. One can recognise a Glutamine amidotransferase type-2 domain in the interval 2-298 (CGIVGLFLKD…PATVYFWDHQ (297 aa)).

The chain is Glutamine amidotransferase-like protein GlxB (glxB) from Rhizobium meliloti (strain 1021) (Ensifer meliloti).